Reading from the N-terminus, the 1502-residue chain is Rho GTPase-activating protein 5 (1502 aa).

FF domains lie at 267 to 325, 366 to 420, 427 to 481, and 482 to 548; these read QLVV…HIEQ, KLME…HVQH, RVEM…HQRE, and IVEK…HIGF. Tyr550 bears the 3'-nitrotyrosine mark. Residues Ser590 and Ser765 each carry the phosphoserine modification. The pG1 pseudoGTPase domain occupies 590–763; the sequence is STNIDKVNLF…LESVKHNLDV (174 aa). A pG2 pseudoGTPase domain is found at 779 to 944; it reads RIVMCAMCGD…FSDVLEKKNM (166 aa). Residues Ser951 and Ser968 each carry the phosphoserine modification. Disordered regions lie at residues 975–1004, 1022–1050, and 1069–1089; these read YNNYPDSDDDTEAPPPYSPIGDDVQLLPTP, HSTPNCHDHERNHKVPPPIKPKPVVPKTN, and NPRKQTSRVPLAHPEDMDPSD. Over residues 1036-1045 the composition is skewed to pro residues; sequence VPPPIKPKPV. Ser1115 is modified (phosphoserine). 2 disordered regions span residues 1125-1156 and 1168-1254; these read FVNNTQGDEENGFSDRTSKSHGERRPSKYKYK and YRRT…TRRN. The span at 1140–1150 shows a compositional bias: basic and acidic residues; it reads RTSKSHGERRP. Phosphoserine is present on residues Ser1173, Ser1176, Ser1195, Ser1202, and Ser1218. Residues 1262 to 1449 form the Rho-GAP domain; sequence MPLQDLVTAE…TFIQQCQFFF (188 aa).

In terms of assembly, may interact with RASA1/p120GAP. In terms of tissue distribution, detected in skin fibroblasts (at protein level).

The protein localises to the cytoplasm. It is found in the cell membrane. In terms of biological role, GTPase-activating protein for Rho family members. The polypeptide is Rho GTPase-activating protein 5 (ARHGAP5) (Homo sapiens (Human)).